We begin with the raw amino-acid sequence, 185 residues long: MIDDTLLEAEEKMEKATNVARENFAAIRTGRANPALFSKITVEYYGTPTPLNQLASFTVADARLIVIHPYDKGSLRAIEKAIRDSDLGVNPTDDGSVIRVAIPPLTEERRRDYIKMARHEAEEARVAIRNIRRHAKDALDKLQKDGEVGEDDVRRAEKELDELTHKYVAHIDEMLKHKEAELLEV.

Belongs to the RRF family.

Its subcellular location is the cytoplasm. Its function is as follows. Responsible for the release of ribosomes from messenger RNA at the termination of protein biosynthesis. May increase the efficiency of translation by recycling ribosomes from one round of translation to another. The chain is Ribosome-recycling factor from Acidothermus cellulolyticus (strain ATCC 43068 / DSM 8971 / 11B).